Reading from the N-terminus, the 382-residue chain is Homoserine O-acetyltransferase (382 aa).

Positions 50–360 constitute an AB hydrolase-1 domain; that stretch reads NAVLICHALT…DKGHDAFLLD (311 aa). The active-site Nucleophile is the S155. R225 serves as a coordination point for substrate. Active-site residues include D321 and H354. D355 lines the substrate pocket.

The protein belongs to the AB hydrolase superfamily. MetX family. As to quaternary structure, homodimer.

The protein localises to the cytoplasm. It carries out the reaction L-homoserine + acetyl-CoA = O-acetyl-L-homoserine + CoA. Its pathway is amino-acid biosynthesis; L-methionine biosynthesis via de novo pathway; O-acetyl-L-homoserine from L-homoserine: step 1/1. In terms of biological role, transfers an acetyl group from acetyl-CoA to L-homoserine, forming acetyl-L-homoserine. This chain is Homoserine O-acetyltransferase, found in Caulobacter vibrioides (strain ATCC 19089 / CIP 103742 / CB 15) (Caulobacter crescentus).